Here is a 204-residue protein sequence, read N- to C-terminus: Octanoyltransferase (204 aa).

A BPL/LPL catalytic domain is found at 30–204; it reads CETPDEIWLL…QSFINQLTDV (175 aa). Substrate-binding positions include 69-76, 136-138, and 149-151; these read RGGQITYH, SLG, and GIA. Cysteine 167 functions as the Acyl-thioester intermediate in the catalytic mechanism.

The protein belongs to the LipB family.

It localises to the cytoplasm. It catalyses the reaction octanoyl-[ACP] + L-lysyl-[protein] = N(6)-octanoyl-L-lysyl-[protein] + holo-[ACP] + H(+). It participates in protein modification; protein lipoylation via endogenous pathway; protein N(6)-(lipoyl)lysine from octanoyl-[acyl-carrier-protein]: step 1/2. Its function is as follows. Catalyzes the transfer of endogenously produced octanoic acid from octanoyl-acyl-carrier-protein onto the lipoyl domains of lipoate-dependent enzymes. Lipoyl-ACP can also act as a substrate although octanoyl-ACP is likely to be the physiological substrate. The polypeptide is Octanoyltransferase (Nitrosomonas europaea (strain ATCC 19718 / CIP 103999 / KCTC 2705 / NBRC 14298)).